A 205-amino-acid polypeptide reads, in one-letter code: MVFLSWGRPSSEQQQQVINKTGTFNYDNKYRGVSSRSIAKLKEDSEIDKDGFLINHARVLVGSGRESYEKGKKALQNWKHFGMDWAFVDPATPVETGKKFCICVKEVLPWVMLPLQVVYVDESRKSRKGPAHFGYGSGTLQGHLLAGEEKFSIELDGNGEVWYEITSFSKPAHFLSFLGYPYVKLRQKHFARHSSEAVLKHVNAS.

It belongs to the UPF0548 family.

This Arabidopsis thaliana (Mouse-ear cress) protein is UPF0548 protein At2g17695.